Reading from the N-terminus, the 210-residue chain is Large ribosomal subunit protein uL4 (210 aa).

Over residues 44-54 the composition is skewed to polar residues; that stretch reads KRQGTASTLTR. The disordered stretch occupies residues 44–94; sequence KRQGTASTLTRSEVRGGGRKPYKQKGTGRARQGSIRTPLRPGGGVIFGPKP. The segment covering 60 to 71 has biased composition (basic residues); sequence GGRKPYKQKGTG.

Belongs to the universal ribosomal protein uL4 family. In terms of assembly, part of the 50S ribosomal subunit.

In terms of biological role, one of the primary rRNA binding proteins, this protein initially binds near the 5'-end of the 23S rRNA. It is important during the early stages of 50S assembly. It makes multiple contacts with different domains of the 23S rRNA in the assembled 50S subunit and ribosome. Functionally, forms part of the polypeptide exit tunnel. The polypeptide is Large ribosomal subunit protein uL4 (Prochlorococcus marinus subsp. pastoris (strain CCMP1986 / NIES-2087 / MED4)).